The chain runs to 331 residues: DNA double-strand break repair nuclease NurA (331 aa).

2 residues coordinate Mn(2+): D56 and D131.

Belongs to the NurA family. Homodimer. Interacts with SSB. It depends on Mn(2+) as a cofactor.

Its activity is regulated as follows. The 5'-3' ssDNA and dsDNA exonuclease and ssDNA endonuclease activities are inhibited by SSB (single-stranded DNA-binding protein). Its function is as follows. Involved in DNA double-strand break (DSB) repair. Probably acts with HerA to stimulate resection of the 5' strand and produce the long 3' single-strand that is required for RadA loading. Exhibits both single-stranded endonuclease activity and 5'-3' exonuclease activity on single-stranded and double-stranded DNA. The protein is DNA double-strand break repair nuclease NurA of Sulfurisphaera tokodaii (strain DSM 16993 / JCM 10545 / NBRC 100140 / 7) (Sulfolobus tokodaii).